We begin with the raw amino-acid sequence, 760 residues long: 5-methyltetrahydropteroyltriglutamate--homocysteine methyltransferase (760 aa).

5-methyltetrahydropteroyltri-L-glutamate is bound by residues 24-27 (RELK) and K118. L-homocysteine is bound by residues 437–439 (IGS) and E490. L-methionine-binding positions include 437 to 439 (IGS) and E490. 5-methyltetrahydropteroyltri-L-glutamate-binding positions include 521–522 (RC) and W567. D605 lines the L-homocysteine pocket. L-methionine is bound at residue D605. E611 is a 5-methyltetrahydropteroyltri-L-glutamate binding site. Residues H647, C649, and E671 each coordinate Zn(2+). Residue H700 is the Proton donor of the active site. C732 contributes to the Zn(2+) binding site.

It belongs to the vitamin-B12 independent methionine synthase family. Requires Zn(2+) as cofactor.

It carries out the reaction 5-methyltetrahydropteroyltri-L-glutamate + L-homocysteine = tetrahydropteroyltri-L-glutamate + L-methionine. Its pathway is amino-acid biosynthesis; L-methionine biosynthesis via de novo pathway; L-methionine from L-homocysteine (MetE route): step 1/1. Its function is as follows. Catalyzes the transfer of a methyl group from 5-methyltetrahydrofolate to homocysteine resulting in methionine formation. This is 5-methyltetrahydropteroyltriglutamate--homocysteine methyltransferase from Mycobacterium leprae (strain TN).